Reading from the N-terminus, the 226-residue chain is Leucyl/phenylalanyl-tRNA--protein transferase (226 aa).

The protein belongs to the L/F-transferase family.

It is found in the cytoplasm. It catalyses the reaction N-terminal L-lysyl-[protein] + L-leucyl-tRNA(Leu) = N-terminal L-leucyl-L-lysyl-[protein] + tRNA(Leu) + H(+). The enzyme catalyses N-terminal L-arginyl-[protein] + L-leucyl-tRNA(Leu) = N-terminal L-leucyl-L-arginyl-[protein] + tRNA(Leu) + H(+). It carries out the reaction L-phenylalanyl-tRNA(Phe) + an N-terminal L-alpha-aminoacyl-[protein] = an N-terminal L-phenylalanyl-L-alpha-aminoacyl-[protein] + tRNA(Phe). Functions in the N-end rule pathway of protein degradation where it conjugates Leu, Phe and, less efficiently, Met from aminoacyl-tRNAs to the N-termini of proteins containing an N-terminal arginine or lysine. The chain is Leucyl/phenylalanyl-tRNA--protein transferase from Bradyrhizobium diazoefficiens (strain JCM 10833 / BCRC 13528 / IAM 13628 / NBRC 14792 / USDA 110).